Reading from the N-terminus, the 164-residue chain is UPF0478 protein SSP1024 (164 aa).

The helical transmembrane segment at 7-27 (IAGIIAAVAFLILVIGIVVVL) threads the bilayer. Residues 136-164 (RNRRDSANYKTSSVANETNHSYTTRVDNK) are disordered. Polar residues predominate over residues 143–164 (NYKTSSVANETNHSYTTRVDNK).

It belongs to the UPF0478 family.

The protein localises to the cell membrane. In Staphylococcus saprophyticus subsp. saprophyticus (strain ATCC 15305 / DSM 20229 / NCIMB 8711 / NCTC 7292 / S-41), this protein is UPF0478 protein SSP1024.